We begin with the raw amino-acid sequence, 425 residues long: Adenosylhomocysteinase (425 aa).

Thr-60, Asp-132, and Glu-157 together coordinate substrate. 158–160 lines the NAD(+) pocket; sequence TTT. Residues Lys-187 and Asp-191 each coordinate substrate. NAD(+)-binding positions include Asn-192, 221 to 226, Glu-244, Asn-279, 300 to 302, and Asn-347; these read GYGWCG and SGH.

The protein belongs to the adenosylhomocysteinase family. NAD(+) serves as cofactor.

Its subcellular location is the cytoplasm. The catalysed reaction is S-adenosyl-L-homocysteine + H2O = L-homocysteine + adenosine. The protein operates within amino-acid biosynthesis; L-homocysteine biosynthesis; L-homocysteine from S-adenosyl-L-homocysteine: step 1/1. May play a key role in the regulation of the intracellular concentration of adenosylhomocysteine. The protein is Adenosylhomocysteinase of Synechocystis sp. (strain ATCC 27184 / PCC 6803 / Kazusa).